Consider the following 291-residue polypeptide: MNWFTKLLPKISTAKKKGVPEGVWHKCPSCTAVLYRVELERNLEVCPKCYYHIRLDPRKRLAQFLDEGEQEELAEDILPVDRLKFRDSKKYKDRLSAAQKATEEKEALVVYKGNIYGNPIVAAAFNFFFVGGSMGAAVGERFAAGVEAAISERLPFVCFSTSGGARMQEGLFSLFQMAKTSAVLARLAEYKLPYISVLTDPTMGGVSASLAMLGDVIIAEPNALIGFSGPRVIEQTIRQTLPEGFQRSEFLLEHGAIDMVVDRRELKSTIASLITKLTHQPPPDLPVEESV.

Residues 23 to 291 form the CoA carboxyltransferase N-terminal domain; it reads VWHKCPSCTA…PPDLPVEESV (269 aa). Zn(2+) is bound by residues C27, C30, C46, and C49. The C4-type zinc-finger motif lies at 27–49; it reads CPSCTAVLYRVELERNLEVCPKC.

It belongs to the AccD/PCCB family. In terms of assembly, acetyl-CoA carboxylase is a heterohexamer composed of biotin carboxyl carrier protein (AccB), biotin carboxylase (AccC) and two subunits each of ACCase subunit alpha (AccA) and ACCase subunit beta (AccD). It depends on Zn(2+) as a cofactor.

It is found in the cytoplasm. The enzyme catalyses N(6)-carboxybiotinyl-L-lysyl-[protein] + acetyl-CoA = N(6)-biotinyl-L-lysyl-[protein] + malonyl-CoA. It functions in the pathway lipid metabolism; malonyl-CoA biosynthesis; malonyl-CoA from acetyl-CoA: step 1/1. Component of the acetyl coenzyme A carboxylase (ACC) complex. Biotin carboxylase (BC) catalyzes the carboxylation of biotin on its carrier protein (BCCP) and then the CO(2) group is transferred by the transcarboxylase to acetyl-CoA to form malonyl-CoA. In Coxiella burnetii (strain Dugway 5J108-111), this protein is Acetyl-coenzyme A carboxylase carboxyl transferase subunit beta.